We begin with the raw amino-acid sequence, 414 residues long: Alanine--glyoxylate aminotransferase (414 aa).

A mitochondrion-targeting transit peptide spans 1–23 (MFQALAKASAALGPRAAGWVRTM). Lysine 231 bears the N6-(pyridoxal phosphate)lysine mark. Residues lysine 256 and lysine 334 each carry the N6-acetyllysine modification. Arginine 382 provides a ligand contact to substrate.

It belongs to the class-V pyridoxal-phosphate-dependent aminotransferase family. In terms of assembly, homodimer. It depends on pyridoxal 5'-phosphate as a cofactor.

It localises to the peroxisome. Its subcellular location is the mitochondrion matrix. The catalysed reaction is L-serine + pyruvate = 3-hydroxypyruvate + L-alanine. It carries out the reaction glyoxylate + L-alanine = glycine + pyruvate. In terms of biological role, catalyzes the transamination of glyoxylate to glycine and contributes to the glyoxylate detoxification. Its function is as follows. Catalyzes the transamination between L-serine and pyruvate and weakly contributes to gluconeogenesis from the L-serine metabolism. The protein is Alanine--glyoxylate aminotransferase of Callithrix jacchus (White-tufted-ear marmoset).